Consider the following 440-residue polypeptide: Adenylyltransferase and sulfurtransferase UBA4 (440 aa).

M1 carries the post-translational modification N-acetylmethionine. ATP-binding positions include G77, D98, 105–109 (SNLHR), K122, and 166–167 (DS). The Zn(2+) site is built by C208 and C211. C225 functions as the Glycyl thioester intermediate; for adenylyltransferase activity in the catalytic mechanism. Residues C286 and C289 each contribute to the Zn(2+) site. A Phosphoserine modification is found at S326. Positions 339 to 438 (FLAKHIFLDV…YIDDIDQTIP (100 aa)) constitute a Rhodanese domain. The active-site Cysteine persulfide intermediate; for sulfurtransferase activity is C397.

This sequence in the N-terminal section; belongs to the HesA/MoeB/ThiF family. UBA4 subfamily. It depends on Zn(2+) as a cofactor.

Its subcellular location is the cytoplasm. The protein localises to the cytosol. It participates in tRNA modification; 5-methoxycarbonylmethyl-2-thiouridine-tRNA biosynthesis. Functionally, plays a central role in 2-thiolation of mcm(5)S(2)U at tRNA wobble positions of cytosolic tRNA(Lys), tRNA(Glu) and tRNA(Gln). Acts by mediating the C-terminal thiocarboxylation of sulfur carrier URM1. Its N-terminus first activates URM1 as acyl-adenylate (-COAMP), then the persulfide sulfur on the catalytic cysteine is transferred to URM1 to form thiocarboxylation (-COSH) of its C-terminus. The reaction probably involves hydrogen sulfide that is generated from the persulfide intermediate and that acts as a nucleophile towards URM1. Subsequently, a transient disulfide bond is formed. Does not use thiosulfate as sulfur donor; NFS1 probably acting as a sulfur donor for thiocarboxylation reactions. Prior mcm(5) tRNA modification by the elongator complex is required for 2-thiolation. May also be involved in protein urmylation. This Saccharomyces cerevisiae (strain YJM789) (Baker's yeast) protein is Adenylyltransferase and sulfurtransferase UBA4.